We begin with the raw amino-acid sequence, 1106 residues long: Inversin (1106 aa).

ANK repeat units lie at residues 13 to 42 (SLASEVHAAAVNGDKSTLLKLIAGNSELKD), 47 to 76 (FGRTPLMYCVLADRVDCAEALLKAGADVNR), 80 to 110 (SRRTALHLAAQKGNYRFMKLLLARRGNWMQK), 113 to 144 (EGMTPLHLTTRHKSPKCLALLLKHMAPGEVDT), 148 to 177 (NKQTALHWSAYYNNPEHVKLLIKHDSNIGI), 181 to 213 (EGKIPLHWAANNKDPSAIHTVKCILEAAPTESL), 220 to 250 (EGRTPLHFAVADGNVAVVDVLTSYEGCNVTS), 254 to 285 (LFRTPLHWAALLGHAQIVHLLLERNKFGTIPS), 288 to 317 (QGATPLHYAAQSNFAETVEVFLKHPSVKDD), 321 to 350 (EGRTSFMWAAGKGSDNVIRTMLDLKLDIDI), 356 to 385 (YAGTALHAAALSGHVSTVKLLLERNAQVDA), 389 to 418 (MKHTPLFRACEMGHKEVIQTLIKGGARVDL), 422 to 451 (DGHSPLHWAALGGNADVCQILIENKINPNV), 455 to 484 (AGRTPLQCAAYGGYINCMVVLLENNADPNI), 488 to 517 (EGRTALHWLCNNGYLDAIKLLLGFDAFPNH), and 523 to 553 (ERYTPLDYALLGEHHEVIQFMLEHGALSIAA). The D-box 1 motif lies at 490 to 498 (RTALHWLCN). The 30-residue stretch at 555 to 584 (QDIAAFKIQAVYKGYKVRKAFQERKNLLMK) folds into the IQ 1 domain. Positions 589 to 607 (RKDAAAKKREEESKRKEAS) are enriched in basic and acidic residues. Disordered regions lie at residues 589-615 (RKDAAAKKREEESKRKEASLQKGMQNM), 636-688 (LQLS…ELQS), 746-782 (ANGTSAHGNRRHASACGTAGAGEKTRDQSLSSSGNRG), and 809-833 (AVPKSKRHQQKSRHKEVNYERCSPA). Composition is skewed to polar residues over residues 636–645 (LQLSNKQTDL) and 653–666 (VSASQIQLGRNSRG). The span at 812–822 (KSKRHQQKSRH) shows a compositional bias: basic residues. The short motif at 944-952 (RKELFRKKN) is the D-box 2 element. The region spanning 951-980 (KNYAATVIQRTWRSYRLRQELSQLLSAKRQ) is the IQ 2 domain.

Binds calmodulin via its IQ domains. Interacts with APC2.

It localises to the cytoplasm. The protein resides in the cytoskeleton. Its function is as follows. Required for normal renal development and establishment of left-right axis. Probably acts as a molecular switch between different Wnt signaling pathways. Inhibits the canonical Wnt pathway by targeting cytoplasmic disheveled for degradation by the ubiquitin-proteasome. This suggests that it is required in renal development to oppose the repression of terminal differentiation of tubular epithelial cells by Wnt signaling. The chain is Inversin (INVS) from Gallus gallus (Chicken).